The chain runs to 175 residues: EKC/KEOPS complex subunit TPRKB (175 aa).

Belongs to the CGI121/TPRKB family. As to quaternary structure, component of the EKC/KEOPS complex.

The protein resides in the cytoplasm. It is found in the cytosol. The protein localises to the nucleus. Functionally, component of the EKC/KEOPS complex that is required for the formation of a threonylcarbamoyl group on adenosine at position 37 (t(6)A37) in tRNAs that read codons beginning with adenine. The complex is probably involved in the transfer of the threonylcarbamoyl moiety of threonylcarbamoyl-AMP (TC-AMP) to the N6 group of A37. Tprkb acts as an allosteric effector that regulates the t(6)A activity of the complex. This Danio rerio (Zebrafish) protein is EKC/KEOPS complex subunit TPRKB.